The chain runs to 152 residues: UPF0756 membrane protein PEPE_1090 (152 aa).

The next 4 membrane-spanning stretches (helical) occupy residues 4–24 (WLFL…SLII), 52–72 (WGVT…KIGF), 85–105 (WIAV…VGFL), and 115–135 (LVMG…GPII).

This sequence belongs to the UPF0756 family.

The protein localises to the cell membrane. This chain is UPF0756 membrane protein PEPE_1090, found in Pediococcus pentosaceus (strain ATCC 25745 / CCUG 21536 / LMG 10740 / 183-1w).